Reading from the N-terminus, the 252-residue chain is Redox-sensing transcriptional repressor Rex (252 aa).

Positions 26-65 (LYLRALTALSERSVPTVSSEELAAAAGVNSAKLRKDFSYL) form a DNA-binding region, H-T-H motif. 100-105 (GIGNLG) is a binding site for NAD(+). A disordered region spans residues 222–252 (EAAAEGAIPAAASKESADKGPDGDVPAVMPA).

Belongs to the transcriptional regulatory Rex family. Homodimer.

The protein localises to the cytoplasm. In terms of biological role, modulates transcription in response to changes in cellular NADH/NAD(+) redox state. The sequence is that of Redox-sensing transcriptional repressor Rex from Streptomyces avermitilis (strain ATCC 31267 / DSM 46492 / JCM 5070 / NBRC 14893 / NCIMB 12804 / NRRL 8165 / MA-4680).